We begin with the raw amino-acid sequence, 202 residues long: dITP/XTP pyrophosphatase (202 aa).

Substrate is bound at residue 10-15; the sequence is TSNRHK. D70 acts as the Proton acceptor in catalysis. D70 is a Mg(2+) binding site. Substrate contacts are provided by residues S71, 153 to 156, K176, and 181 to 182; these read FGYD and HR.

This sequence belongs to the HAM1 NTPase family. As to quaternary structure, homodimer. Requires Mg(2+) as cofactor.

It carries out the reaction XTP + H2O = XMP + diphosphate + H(+). The catalysed reaction is dITP + H2O = dIMP + diphosphate + H(+). The enzyme catalyses ITP + H2O = IMP + diphosphate + H(+). Pyrophosphatase that catalyzes the hydrolysis of nucleoside triphosphates to their monophosphate derivatives, with a high preference for the non-canonical purine nucleotides XTP (xanthosine triphosphate), dITP (deoxyinosine triphosphate) and ITP. Seems to function as a house-cleaning enzyme that removes non-canonical purine nucleotides from the nucleotide pool, thus preventing their incorporation into DNA/RNA and avoiding chromosomal lesions. The chain is dITP/XTP pyrophosphatase from Methylacidiphilum infernorum (isolate V4) (Methylokorus infernorum (strain V4)).